The sequence spans 713 residues: MMQESATETISNSSMNQNGMSTLSSQLDAGSRDGRSSGDTSSEVSTVELLHLQQQQALQAARQLLLQQQTSGLKSPKSSDKQRPLQVPVSVAMMTPQVITPQQMQQILQQQVLSPQQLQALLQQQQAVMLQQQQLQEFYKKQQEQLHLQLLQQQQQQQQQQQQQQQQQQQQQQQQQQQQQQQQQQQQQQQHPGKQAKEQQQQQQQQQLAAQQLVFQQQLLQMQQLQQQQHLLSLQRQGLISIPPGQAALPVQSLPQAGLSPAEIQQLWKEVTGVHSMEDNGIKHGGLDLTTNNSSSTTSSTTSKASPPITHHSIVNGQSSVLNARRDSSSHEETGASHTLYGHGVCKWPGCESICEDFGQFLKHLNNEHALDDRSTAQCRVQMQVVQQLEIQLSKERERLQAMMTHLHMRPSEPKPSPKPLNLVSSVTMSKNMLETSPQSLPQTPTTPTAPVTPITQGPSVITPASVPNVGAIRRRHSDKYNIPMSSEIAPNYEFYKNADVRPPFTYATLIRQAIMESSDRQLTLNEIYSWFTRTFAYFRRNAATWKNAVRHNLSLHKCFVRVENVKGAVWTVDEVEYQKRRSQKITGSPTLVKNIPTSLGYGAALNASLQAALAESSLPLLSNPGLINNASSGLLQAVHEDLNGSLDHIDSNGNSSPGCSPQPHIHSIHVKEEPVIAEDEDCPMSLVTTANHSPELEDDREIEEEPLSEDLE.

Positions 1-28 (MMQESATETISNSSMNQNGMSTLSSQLD) are enriched in polar residues. Disordered stretches follow at residues 1–45 (MMQE…SEVS) and 279–337 (DNGI…TGAS). Positions 290–303 (TTNNSSSTTSSTTS) are enriched in low complexity. The segment covering 313-322 (SIVNGQSSVL) has biased composition (polar residues). Basic and acidic residues predominate over residues 324–335 (ARRDSSSHEETG). A C2H2-type zinc finger spans residues 344-369 (GVCKWPGCESICEDFGQFLKHLNNEH). Residues 386-407 (VQQLEIQLSKERERLQAMMTHL) are leucine-zipper. The interval 420-424 (PLNLV) is CTBP1-binding. A compositionally biased stretch (low complexity) spans 436 to 457 (TSPQSLPQTPTTPTAPVTPITQ). Positions 436–463 (TSPQSLPQTPTTPTAPVTPITQGPSVIT) are disordered. Residues 502-592 (RPPFTYATLI…SQKITGSPTL (91 aa)) constitute a DNA-binding region (fork-head). 2 disordered regions span residues 647 to 666 (LDHI…QPHI) and 676 to 713 (VIAE…EDLE). Residues 697-713 (LEDDREIEEEPLSEDLE) are compositionally biased toward acidic residues.

In terms of assembly, forms homodimers and heterodimers with FOXP1 and FOXP4. Dimerization is required for DNA-binding. Interacts with CTBP1. Interacts with FOXP1. Interacts with TBR1. Interacts with ZMYM2.

Its subcellular location is the nucleus. Functionally, transcriptional repressor that may play a role in the specification and differentiation of lung epithelium. May also play a role in developing neural, gastrointestinal and cardiovascular tissues. Can act with CTBP1 to synergistically repress transcription but CTPBP1 is not essential. Plays a role in synapse formation by regulating SRPX2 levels. The sequence is that of Forkhead box protein P2 (FOXP2) from Hylobates lar (Lar gibbon).